We begin with the raw amino-acid sequence, 231 residues long: NADH-ubiquinone oxidoreductase chain 4 (231 aa).

7 consecutive transmembrane segments (helical) span residues Pro1–Ile21, Met34–Leu54, Leu62–Thr82, Leu86–Leu106, Ile118–Leu138, Thr169–Leu189, and Leu211–Met231.

The protein belongs to the complex I subunit 4 family.

It localises to the mitochondrion membrane. The catalysed reaction is a ubiquinone + NADH + 5 H(+)(in) = a ubiquinol + NAD(+) + 4 H(+)(out). In terms of biological role, core subunit of the mitochondrial membrane respiratory chain NADH dehydrogenase (Complex I) that is believed to belong to the minimal assembly required for catalysis. Complex I functions in the transfer of electrons from NADH to the respiratory chain. The immediate electron acceptor for the enzyme is believed to be ubiquinone. The polypeptide is NADH-ubiquinone oxidoreductase chain 4 (MT-ND4) (Causus rhombeatus (Rhombic night adder)).